A 207-amino-acid polypeptide reads, in one-letter code: MARCKS-related protein 1-B (207 aa).

2 stretches are compositionally biased toward low complexity: residues 1 to 25 (MGSQ…AAVK) and 63 to 77 (AGAG…AAEG). Positions 1–207 (MGSQASKGGV…STPAPSEQKE (207 aa)) are disordered. Gly2 carries N-myristoyl glycine lipidation. Residues 78–90 (EAAKPEGEATKET) are compositionally biased toward basic and acidic residues. The segment at 93–116 (KKKKKFSLKNSFKFKGISLKKSKK) is effector domain involved in lipid-binding. Over residues 100–109 (LKNSFKFKGI) the composition is skewed to low complexity. Basic and acidic residues-rich tracts occupy residues 131–154 (TEEK…KAEE) and 163–182 (PKAE…KEEA). Positions 195–207 (ETNSTPAPSEQKE) are enriched in polar residues.

It belongs to the MARCKS family. In terms of tissue distribution, strongly expressed in brain and eye. Also detected at lower levels in muscle.

Its subcellular location is the cytoplasm. It is found in the cytoskeleton. The protein localises to the cell membrane. Its function is as follows. Involved in the control of cell movement by regulating actin cytoskeleton homeostasis and filopodium and lamellipodium formation. The chain is MARCKS-related protein 1-B from Danio rerio (Zebrafish).